A 238-amino-acid chain; its full sequence is Ribonuclease PH (238 aa).

Residues R86 and 124 to 126 each bind phosphate; that span reads GTR.

It belongs to the RNase PH family. In terms of assembly, homohexameric ring arranged as a trimer of dimers.

It catalyses the reaction tRNA(n+1) + phosphate = tRNA(n) + a ribonucleoside 5'-diphosphate. Its function is as follows. Phosphorolytic 3'-5' exoribonuclease that plays an important role in tRNA 3'-end maturation. Removes nucleotide residues following the 3'-CCA terminus of tRNAs; can also add nucleotides to the ends of RNA molecules by using nucleoside diphosphates as substrates, but this may not be physiologically important. Probably plays a role in initiation of 16S rRNA degradation (leading to ribosome degradation) during starvation. This is Ribonuclease PH from Nitrosospira multiformis (strain ATCC 25196 / NCIMB 11849 / C 71).